Here is a 248-residue protein sequence, read N- to C-terminus: Coproheme decarboxylase (248 aa).

Fe-coproporphyrin III is bound by residues Arg-130, Tyr-144–Lys-148, His-171, Gln-184, and Ser-222. Tyr-144 is a catalytic residue.

Belongs to the ChdC family. Type 1 subfamily. As to quaternary structure, homopentamer. Requires Fe-coproporphyrin III as cofactor.

The catalysed reaction is Fe-coproporphyrin III + 2 H2O2 + 2 H(+) = heme b + 2 CO2 + 4 H2O. It carries out the reaction Fe-coproporphyrin III + H2O2 + H(+) = harderoheme III + CO2 + 2 H2O. The enzyme catalyses harderoheme III + H2O2 + H(+) = heme b + CO2 + 2 H2O. It participates in porphyrin-containing compound metabolism; protoheme biosynthesis. Involved in coproporphyrin-dependent heme b biosynthesis. Catalyzes the decarboxylation of Fe-coproporphyrin III (coproheme) to heme b (protoheme IX), the last step of the pathway. The reaction occurs in a stepwise manner with a three-propionate intermediate. This Geobacillus kaustophilus (strain HTA426) protein is Coproheme decarboxylase.